Here is a 288-residue protein sequence, read N- to C-terminus: Polyamine aminopropyltransferase (288 aa).

Residues 9 to 238 enclose the PABS domain; sequence ETLHDQFGQY…GIMTFAWATD (230 aa). Gln33 provides a ligand contact to S-methyl-5'-thioadenosine. Spermidine contacts are provided by His64 and Asp88. S-methyl-5'-thioadenosine-binding positions include Glu108 and 140 to 141; that span reads DG. The Proton acceptor role is filled by Asp158. A spermidine-binding site is contributed by 158–161; the sequence is DCTD. Pro165 provides a ligand contact to S-methyl-5'-thioadenosine.

It belongs to the spermidine/spermine synthase family. In terms of assembly, homodimer or homotetramer.

The protein localises to the cytoplasm. It catalyses the reaction S-adenosyl 3-(methylsulfanyl)propylamine + putrescine = S-methyl-5'-thioadenosine + spermidine + H(+). It functions in the pathway amine and polyamine biosynthesis; spermidine biosynthesis; spermidine from putrescine: step 1/1. In terms of biological role, catalyzes the irreversible transfer of a propylamine group from the amino donor S-adenosylmethioninamine (decarboxy-AdoMet) to putrescine (1,4-diaminobutane) to yield spermidine. The chain is Polyamine aminopropyltransferase from Shigella flexneri serotype 5b (strain 8401).